The sequence spans 476 residues: Serine/threonine-protein kinase Chk1 (476 aa).

Residues 1–265 (MAVPFVEDWD…IPDIKKDRWY (265 aa)) are interaction with CLSPN. In terms of domain architecture, Protein kinase spans 9 to 265 (WDLVQTLGEG…IPDIKKDRWY (257 aa)). ATP-binding positions include 15 to 23 (LGEGAYGEV) and Lys38. Residue Asp130 is the Proton acceptor of the active site. A Glycyl lysine isopeptide (Lys-Gly) (interchain with G-Cter in ubiquitin) cross-link involves residue Lys132. Positions 267–329 (KPLNRGAKRP…EPRTGLSLWD (63 aa)) are disordered. Ser280 carries the post-translational modification Phosphoserine; by PKB/AKT1. Over residues 280–291 (SGGMSESSSGFS) the composition is skewed to low complexity. 3 positions are modified to phosphoserine: Ser286, Ser296, and Ser301. Residues 298–320 (LDFSPINSGSSEENVKFSSSQPE) are compositionally biased toward polar residues. Residues Ser317 and Ser345 each carry the phosphoserine; by ATM and ATR modification. The segment at 391-476 (QCLKETFEKL…SSQKVWFPVT (86 aa)) is autoinhibitory region. A Glycyl lysine isopeptide (Lys-Gly) (interchain with G-Cter in ubiquitin) cross-link involves residue Lys436. Residues Ser463, Ser467, and Ser468 each carry the phosphoserine modification.

It belongs to the protein kinase superfamily. CAMK Ser/Thr protein kinase family. NIM1 subfamily. In terms of assembly, interacts (phosphorylated by ATR) with RAD51. Interacts with and phosphorylates CLSPN, an adapter protein that regulates the ATR-dependent phosphorylation of CHEK1. Interacts with BRCA1. Interacts with and phosphorylates CDC25A, CDC25B and CDC25C. Interacts with FBXO6, which regulates CHEK1. Interacts with PPM1D, which regulates CHEK1 through dephosphorylation. Interacts with TIMELESS; DNA damage-dependent. Interacts with FEM1B; activates CHEK1 in response to stress. Interacts with TLK1. Interacts with XPO1 and YWHAZ. Interacts with CDK5RAP3; antagonizes CHEK1. In terms of processing, phosphorylated by ATR in a RAD17-dependent manner in response to ultraviolet irradiation and inhibition of DNA replication. Phosphorylated by ATM in response to ionizing irradiation. ATM and ATR can both phosphorylate Ser-317 and Ser-345 and this results in enhanced kinase activity. Phosphorylation at Ser-345 induces a change in the conformation of the protein, activates the kinase activity and is a prerequisite for interaction with FBXO6 and subsequent ubiquitination at Lys-436. Phosphorylation at Ser-345 also increases binding to 14-3-3 proteins and promotes nuclear retention. Conversely, dephosphorylation at Ser-345 by PPM1D may contribute to exit from checkpoint mediated cell cycle arrest. Phosphorylation at Ser-280 by AKT1/PKB, may promote mono and/or diubiquitination. Also phosphorylated at undefined residues during mitotic arrest, resulting in decreased activity. Post-translationally, ubiquitinated. Mono or diubiquitination promotes nuclear exclusion. The activated form (phosphorylated on Ser-345) is polyubiquitinated at Lys-436 by some SCF-type E3 ubiquitin ligase complex containing FBXO6 promoting its degradation. Ubiquitination and degradation are required to terminate the checkpoint and ensure that activated CHEK1 does not accumulate as cells progress through S phase, when replication forks encounter transient impediments during normal DNA replication. 'Lys-63'-mediated ubiquitination by TRAF4 at Lys-132 activates cell cycle arrest and activation of DNA repair. Proteolytically cleaved at the C-terminus by SPRTN during normal DNA replication, thereby promoting CHEK1 removal from chromatin and activating the protein kinase activity. As to expression, expressed in brain, heart, liver, lung, skeletal muscle, spleen and testis. In terms of tissue distribution, expressed only in liver.

It is found in the nucleus. The protein resides in the chromosome. Its subcellular location is the cytoplasm. The protein localises to the cytoskeleton. It localises to the microtubule organizing center. It is found in the centrosome. It carries out the reaction L-seryl-[protein] + ATP = O-phospho-L-seryl-[protein] + ADP + H(+). The catalysed reaction is L-threonyl-[protein] + ATP = O-phospho-L-threonyl-[protein] + ADP + H(+). With respect to regulation, activated through phosphorylation predominantly by ATR but also by ATM in response to DNA damage or inhibition of DNA replication. Activation is modulated by several mediators including CLSPN, BRCA1 and FEM1B. Proteolytic cleavage at the C-terminus by SPRTN during normal DNA replication activates the protein kinase activity. Serine/threonine-protein kinase which is required for checkpoint-mediated cell cycle arrest and activation of DNA repair in response to the presence of DNA damage or unreplicated DNA. May also negatively regulate cell cycle progression during unperturbed cell cycles. This regulation is achieved by a number of mechanisms that together help to preserve the integrity of the genome. Recognizes the substrate consensus sequence [R-X-X-S/T]. Binds to and phosphorylates CDC25A, CDC25B and CDC25C. Phosphorylation of CDC25A at 'Ser-178' and 'Thr-507' and phosphorylation of CDC25C at 'Ser-216' creates binding sites for 14-3-3 proteins which inhibit CDC25A and CDC25C. Phosphorylation of CDC25A at 'Ser-76', 'Ser-124', 'Ser-178', 'Ser-279' and 'Ser-293' promotes proteolysis of CDC25A. Phosphorylation of CDC25A at 'Ser-76' primes the protein for subsequent phosphorylation at 'Ser-79', 'Ser-82' and 'Ser-88' by NEK11, which is required for polyubiquitination and degradation of CDCD25A. Inhibition of CDC25 leads to increased inhibitory tyrosine phosphorylation of CDK-cyclin complexes and blocks cell cycle progression. Also phosphorylates NEK6. Binds to and phosphorylates RAD51 at 'Thr-309', which promotes the release of RAD51 from BRCA2 and enhances the association of RAD51 with chromatin, thereby promoting DNA repair by homologous recombination. Phosphorylates multiple sites within the C-terminus of TP53, which promotes activation of TP53 by acetylation and promotes cell cycle arrest and suppression of cellular proliferation. Also promotes repair of DNA cross-links through phosphorylation of FANCE. Binds to and phosphorylates TLK1 at 'Ser-743', which prevents the TLK1-dependent phosphorylation of the chromatin assembly factor ASF1A. This may enhance chromatin assembly both in the presence or absence of DNA damage. May also play a role in replication fork maintenance through regulation of PCNA. May regulate the transcription of genes that regulate cell-cycle progression through the phosphorylation of histones. Phosphorylates histone H3.1 (to form H3T11ph), which leads to epigenetic inhibition of a subset of genes. May also phosphorylate RB1 to promote its interaction with the E2F family of transcription factors and subsequent cell cycle arrest. Phosphorylates SPRTN, promoting SPRTN recruitment to chromatin. Reduces replication stress and activates the G2/M checkpoint, by phosphorylating and inactivating PABIR1/FAM122A and promoting the serine/threonine-protein phosphatase 2A-mediated dephosphorylation and stabilization of WEE1 levels and activity. This is Serine/threonine-protein kinase Chk1 (Chek1) from Rattus norvegicus (Rat).